We begin with the raw amino-acid sequence, 209 residues long: MPVAVMADNAFSFRKLLDQCENQELEAPGGIATPPVYGQLLALYLLQNDMNNARYLWKRIPPAIKSANSELGGIWSVGQRIWQRDFPGIYTTINAHQWSETVQPIMEALRDATRRRAFALVSQAYTSIIADDFAAFVGLPVEEAVKGVLEQGWQADSTTRMVLPRKPAPGALDVSLNRFIPLSEPAPVPPIPNEQQLARLTDYVAFLEN.

A PCI domain is found at 8 to 179 (DNAFSFRKLL…GALDVSLNRF (172 aa)). A Phosphoserine modification is found at Ser175.

This sequence belongs to the CSN8 family. In terms of assembly, component of the CSN complex, composed of COPS1/GPS1, COPS2, COPS3, COPS4, COPS5, COPS6, COPS7 (COPS7A or COPS7B), COPS8 and COPS9. In the complex, it probably interacts directly with COPS3, COPS4 and COPS7 (COPS7A or COPS7B).

The protein resides in the cytoplasm. It is found in the nucleus. Its function is as follows. Component of the COP9 signalosome complex (CSN), a complex involved in various cellular and developmental processes. The CSN complex is an essential regulator of the ubiquitin (Ubl) conjugation pathway by mediating the deneddylation of the cullin subunits of SCF-type E3 ligase complexes, leading to decrease the Ubl ligase activity of SCF-type complexes such as SCF, CSA or DDB2. The complex is also involved in phosphorylation of p53/TP53, c-jun/JUN, IkappaBalpha/NFKBIA, ITPK1 and IRF8/ICSBP, possibly via its association with CK2 and PKD kinases. CSN-dependent phosphorylation of TP53 and JUN promotes and protects degradation by the Ubl system, respectively. In Rattus norvegicus (Rat), this protein is COP9 signalosome complex subunit 8 (Cops8).